The chain runs to 33 residues: MSDIN-like toxin proprotein 6 (33 aa).

The propeptide occupies 1-10 (MSDINATRLP). Residues 11–20 (LILLAALGIP) constitute a cross-link (cyclopeptide (Leu-Pro)). The propeptide occupies 21 to 33 (SDDADSTLTRGER).

This sequence belongs to the MSDIN fungal toxin family. Processed by the macrocyclase-peptidase enzyme POPB to yield a toxic cyclic decapeptide. POPB first removes 10 residues from the N-terminus. Conformational trapping of the remaining peptide forces the enzyme to release this intermediate rather than proceed to macrocyclization. The enzyme rebinds the remaining peptide in a different conformation and catalyzes macrocyclization of the N-terminal 10 residues.

Its function is as follows. Probable toxin that belongs to the MSDIN-like toxin family responsible for a large number of food poisoning cases and deaths. This chain is MSDIN-like toxin proprotein 6, found in Amanita phalloides (Death cap).